An 83-amino-acid chain; its full sequence is Small ribosomal subunit protein uS17 (83 aa).

The protein belongs to the universal ribosomal protein uS17 family. As to quaternary structure, part of the 30S ribosomal subunit.

Functionally, one of the primary rRNA binding proteins, it binds specifically to the 5'-end of 16S ribosomal RNA. This chain is Small ribosomal subunit protein uS17, found in Acaryochloris marina (strain MBIC 11017).